Here is a 1128-residue protein sequence, read N- to C-terminus: Nck-associated protein 1 (1128 aa).

At Ser2 the chain carries N-acetylserine. Positions 640–665 are disordered; that stretch reads AVNKKSKKQTGKKGEPEREKPGVESM. The span at 651–665 shows a compositional bias: basic and acidic residues; it reads KKGEPEREKPGVESM. A helical membrane pass occupies residues 995–1015; sequence IACLLMVFVAVSLPTLASNVM.

This sequence belongs to the HEM-1/HEM-2 family. In terms of assembly, component of the WAVE1 complex composed of ABI2, CYFIP1 or CYFIP2, BRK1, NCKAP1 and WASF1/WAVE1. Within the complex, a heterodimer containing NCKAP1 and CYFIP1 interacts with a heterotrimer formed by WAVE1, ABI2 and BRK1. Component of the WAVE2 complex composed of ABI1, CYFIP1/SRA1, NCKAP1/NAP1 and WASF2/WAVE2. CYFIP2 binds to activated RAC1 which causes the complex to dissociate, releasing activated WASF1. The complex can also be activated by NCK1. Associates preferentially with the first SH3 domain of NCK. Interacts with NYAP1, NYAP2 and MYO16. Interacts with TMEM132D. In terms of tissue distribution, preferentially expressed in brain, heart, liver and testis.

The protein resides in the cell membrane. The protein localises to the cell projection. It is found in the lamellipodium membrane. Part of the WAVE complex that regulates lamellipodia formation. The WAVE complex regulates actin filament reorganization via its interaction with the Arp2/3 complex. Actin remodeling activity is regulated by RAC1. As component of the WAVE1 complex, required for BDNF-NTRK2 endocytic trafficking and signaling from early endosomes. The protein is Nck-associated protein 1 (Nckap1) of Rattus norvegicus (Rat).